The sequence spans 348 residues: Fructose-1,6-bisphosphatase class 1 (348 aa).

4 residues coordinate Mg(2+): E107, D129, I131, and D132. Substrate-binding positions include 132–135, N224, Y252, and K282; that span reads DGSS. E288 contributes to the Mg(2+) binding site.

The protein belongs to the FBPase class 1 family. Homotetramer. It depends on Mg(2+) as a cofactor.

It is found in the cytoplasm. It catalyses the reaction beta-D-fructose 1,6-bisphosphate + H2O = beta-D-fructose 6-phosphate + phosphate. It participates in carbohydrate biosynthesis; Calvin cycle. This is Fructose-1,6-bisphosphatase class 1 from Microcystis aeruginosa (strain NIES-843 / IAM M-2473).